The sequence spans 448 residues: MFQALSDGFKNALNKIRFQDDEKALDRALDELKKTLLKNDVHHKVARELLKKVESQTKLNGIGKQQFLDALEKSLLEILSAKGSSGFTFAQTPPTVVLMAGLQGSGKTTTTAKLAHYLKTKNKKVLLCACDLQRLAAVEQLKVLGEQVGVEVFYEENKSVKEIASNALKRAKEAQFDVLLVDSAGRLAIDKELMQELKEVKEILNPHEVLYVADALSGQDGVKSANTFNEEIGVSGVVLSKFDSDSKGGIALGITYQLGLPLRFIGSGEKIPDLDVFVPERIVGRLMGAGDIVSLAEKTASVLNPNEAKDLSKKLKKGQFTFNDFLNQIEKVKKLGSMSSLISMIPGLGNMASALKDTDLESSLEVKKIKAMVNSMTKKEQENPEILNGSRRKRIALGSGLEVSEINRIIKRFDQASKMAKRLTNKKGISDLMNLMSQAKNQTPPKMR.

Residues 101-108 (GLQGSGKT), 182-186 (DSAGR), and 240-243 (SKFD) contribute to the GTP site.

It belongs to the GTP-binding SRP family. SRP54 subfamily. Part of the signal recognition particle protein translocation system, which is composed of SRP and FtsY. SRP is a ribonucleoprotein composed of Ffh and a 4.5S RNA molecule.

The protein resides in the cytoplasm. It catalyses the reaction GTP + H2O = GDP + phosphate + H(+). In terms of biological role, involved in targeting and insertion of nascent membrane proteins into the cytoplasmic membrane. Binds to the hydrophobic signal sequence of the ribosome-nascent chain (RNC) as it emerges from the ribosomes. The SRP-RNC complex is then targeted to the cytoplasmic membrane where it interacts with the SRP receptor FtsY. Interaction with FtsY leads to the transfer of the RNC complex to the Sec translocase for insertion into the membrane, the hydrolysis of GTP by both Ffh and FtsY, and the dissociation of the SRP-FtsY complex into the individual components. This Helicobacter pylori (strain ATCC 700392 / 26695) (Campylobacter pylori) protein is Signal recognition particle protein.